The primary structure comprises 633 residues: DNA mismatch repair protein MutL (633 aa).

Disordered stretches follow at residues 336-364 and 384-405; these read VRPDDQLAPPGATSLTEPRPTGAAAGEFG and GWSGGASSSGASSGYSAYTRPE. Positions 388 to 401 are enriched in low complexity; that stretch reads GASSSGASSGYSAY.

The protein belongs to the DNA mismatch repair MutL/HexB family.

In terms of biological role, this protein is involved in the repair of mismatches in DNA. It is required for dam-dependent methyl-directed DNA mismatch repair. May act as a 'molecular matchmaker', a protein that promotes the formation of a stable complex between two or more DNA-binding proteins in an ATP-dependent manner without itself being part of a final effector complex. This is DNA mismatch repair protein MutL from Pseudomonas paraeruginosa (strain DSM 24068 / PA7) (Pseudomonas aeruginosa (strain PA7)).